Here is a 115-residue protein sequence, read N- to C-terminus: MTTSFYFLLMALGLLLYVCQSSFGNQHTRNSDTPKYRCGSDIPNSYMDLCFRKRNDAGKKRGQASPLWQRGGSLSMLKARAKRNEAFHLQRAHRGVVEHCCYRPCSNAEFKKFCG.

The first 24 residues, 1–24 (MTTSFYFLLMALGLLLYVCQSSFG), serve as a signal peptide directing secretion. A propeptide spanning residues 25–29 (NQHTR) is cleaved from the precursor. Residue proline 34 is modified to 4-hydroxyproline; partial. 3 cysteine pairs are disulfide-bonded: cysteine 38–cysteine 101, cysteine 50–cysteine 114, and cysteine 100–cysteine 105. Positions 52 to 94 (RKRNDAGKKRGQASPLWQRGGSLSMLKARAKRNEAFHLQRAHR) are cleaved as a propeptide — c peptide. Glutamate 98 bears the 4-carboxyglutamate mark. 4-hydroxyproline; partial is present on proline 104. Position 109 is a 4-carboxyglutamate; partial (glutamate 109). Cysteine 114 carries the post-translational modification Cysteine amide.

This sequence belongs to the insulin family. Heterodimer of A and B chains; disulfide-linked. In terms of tissue distribution, expressed by the venom gland.

It is found in the secreted. This venom insulin, from a fish-hunting cone snail, facilitates prey capture by rapidly inducing hypoglycemic shock. It is one of the smallest known insulin found in nature and lacks the C-terminal segment of the B chain that, in human insulin, mediates engagement of the insulin receptor (INSR) and assembly of the hormone's hexameric storage form. Despite lacking this segment, it both binds and activates human insulin receptor (long isoform (HIR-B) of INSR) with a high potency (EC(50)=12.0 nM). In vivo, intraperitoneal injection of this peptide into zebrafish lowers blood glucose with a lower potency than human insulin. In addition, when applied to water, this peptide reduces overall locomotor activity of zebrafish larvae, observed as a significant decrease in the percentage of time spent swimming and movement frequency. When tested on a mouse model of diabetes, this insulin also lowers blood glucose with a 10-fold lower potency than human insulin. This chain is Con-Ins T1B, found in Conus tulipa (Fish-hunting cone snail).